Consider the following 310-residue polypeptide: Acetylglutamate kinase (310 aa).

Substrate-binding positions include 79-80, Arg-101, and Asn-206; that span reads GG.

Belongs to the acetylglutamate kinase family. ArgB subfamily.

It is found in the cytoplasm. The enzyme catalyses N-acetyl-L-glutamate + ATP = N-acetyl-L-glutamyl 5-phosphate + ADP. Its pathway is amino-acid biosynthesis; L-arginine biosynthesis; N(2)-acetyl-L-ornithine from L-glutamate: step 2/4. Catalyzes the ATP-dependent phosphorylation of N-acetyl-L-glutamate. In Rhodospirillum rubrum (strain ATCC 11170 / ATH 1.1.1 / DSM 467 / LMG 4362 / NCIMB 8255 / S1), this protein is Acetylglutamate kinase.